We begin with the raw amino-acid sequence, 87 residues long: Cell division protein FtsL (87 aa).

Residues 1–3 (MSR) are Cytoplasmic-facing. A helical transmembrane segment spans residues 4-23 (LLLIVLLACSIASAIGVVYM). The Periplasmic segment spans residues 24 to 87 (RHMHRKLFVQ…ETSDIVVIRP (64 aa)).

It belongs to the FtsL family. Part of a complex composed of FtsB, FtsL and FtsQ.

It localises to the cell inner membrane. Its function is as follows. Essential cell division protein. May link together the upstream cell division proteins, which are predominantly cytoplasmic, with the downstream cell division proteins, which are predominantly periplasmic. This is Cell division protein FtsL from Xanthomonas campestris pv. campestris (strain ATCC 33913 / DSM 3586 / NCPPB 528 / LMG 568 / P 25).